The sequence spans 296 residues: Nucleotide-binding protein ABC3036 (296 aa).

ATP is bound at residue 13 to 20 (GMSGAGKS). A GTP-binding site is contributed by 64-67 (DLRG).

Belongs to the RapZ-like family.

Displays ATPase and GTPase activities. This is Nucleotide-binding protein ABC3036 from Shouchella clausii (strain KSM-K16) (Alkalihalobacillus clausii).